Consider the following 469-residue polypeptide: UDP-N-acetylmuramate--L-alanine ligase (469 aa).

Residue 114-120 (GTHGKTT) participates in ATP binding.

Belongs to the MurCDEF family.

The protein localises to the cytoplasm. The enzyme catalyses UDP-N-acetyl-alpha-D-muramate + L-alanine + ATP = UDP-N-acetyl-alpha-D-muramoyl-L-alanine + ADP + phosphate + H(+). It functions in the pathway cell wall biogenesis; peptidoglycan biosynthesis. In terms of biological role, cell wall formation. The polypeptide is UDP-N-acetylmuramate--L-alanine ligase (Sinorhizobium fredii (strain NBRC 101917 / NGR234)).